A 690-amino-acid chain; its full sequence is Wilms tumor protein 1-interacting protein homolog (690 aa).

Disordered stretches follow at residues Met151–Arg316 and Thr328–Ser372. Residues Ser152–Ser186 show a composition bias toward low complexity. Composition is skewed to polar residues over residues Glu204 to Gly214, Pro223 to Asp233, Pro240 to Ile261, and Pro272 to Asp292. Positions Ser335 to Ser357 are enriched in low complexity. LIM zinc-binding domains lie at Gly479–Gln540, Asp544–Ala603, and Pro604–Val673.

It belongs to the zyxin/ajuba family. In terms of assembly, interacts with prickle3.

It is found in the cell junction. Its subcellular location is the adherens junction. It localises to the nucleus. Its function is as follows. May monitor slit diaphragm protein assembly, a specialized adherens junction characteristic of podocytes. In case of podocyte injury, it shuttles into the nucleus and acts as a transcription regulator. Plays a role in the regulation of cell morphology and cytoskeletal organization. Acts as a transcriptional corepressor for snai1 and snai2/slug and plays a role in regulating neural crest development. Involved in the organization of the basal body. Involved in cilia growth and positioning. This Xenopus laevis (African clawed frog) protein is Wilms tumor protein 1-interacting protein homolog (wtip).